A 500-amino-acid polypeptide reads, in one-letter code: L-arabinose isomerase (500 aa).

4 residues coordinate Mn(2+): Glu306, Glu333, His350, and His450.

Belongs to the arabinose isomerase family. Homohexamer. It depends on Mn(2+) as a cofactor.

It catalyses the reaction beta-L-arabinopyranose = L-ribulose. The protein operates within carbohydrate degradation; L-arabinose degradation via L-ribulose; D-xylulose 5-phosphate from L-arabinose (bacterial route): step 1/3. Functionally, catalyzes the conversion of L-arabinose to L-ribulose. This Klebsiella pneumoniae subsp. pneumoniae (strain ATCC 700721 / MGH 78578) protein is L-arabinose isomerase.